Reading from the N-terminus, the 208-residue chain is N-(5'-phosphoribosyl)anthranilate isomerase (208 aa).

Belongs to the TrpF family.

The catalysed reaction is N-(5-phospho-beta-D-ribosyl)anthranilate = 1-(2-carboxyphenylamino)-1-deoxy-D-ribulose 5-phosphate. Its pathway is amino-acid biosynthesis; L-tryptophan biosynthesis; L-tryptophan from chorismate: step 3/5. The polypeptide is N-(5'-phosphoribosyl)anthranilate isomerase (Nitrosospira multiformis (strain ATCC 25196 / NCIMB 11849 / C 71)).